We begin with the raw amino-acid sequence, 322 residues long: uncharacterized protein (322 aa).

A run of 8 helical transmembrane segments spans residues 7 to 27, 54 to 74, 87 to 107, 128 to 148, 162 to 182, 209 to 229, 249 to 269, and 287 to 307; these read IQKI…IGAI, AFAL…LAMF, FVGF…LSGS, IAFC…ITFV, FLSV…YLLI, IGLT…LLPG, GIIS…LFLL, and VIYY…FELL.

The protein to E.coli YbhN.

The protein resides in the cell membrane. This is an uncharacterized protein from Synechocystis sp. (strain ATCC 27184 / PCC 6803 / Kazusa).